A 348-amino-acid chain; its full sequence is TEGPFFYIPMVNTSGVVRSPYEYPQYYLVNPAAYAILGAYMFFLIIIGFPVNFMTLYVTLEHKKLRTPLNYILLNLAVADLFMVIGGFTTTMYSSMHGYFVLGRLGCNMEGFSATLGGMISLWSLAVLAIERWVVVCKPISNFRFGENHAIMGVSLTWFMALACTVPPLVGWSRYIPEGMQCSCGIDYYTRAEGFNNESFVLYMFFCHFLVPLVIIFFCYGRLLCAVKEAAAAQQESETTQRAEREVTRMVIIMVIGFLVCWLPYASVAWFIFTHQGSEFGPLFMTIPAFFAKSSSIYNPMIYICMNKQFRNCMITTLFCGKNPFEGEEEGASSTKTEASSASSVSPA.

Residues threonine 1 to alanine 33 are Extracellular-facing. The N-linked (GlcNAc...) asparagine glycan is linked to asparagine 12. The chain crosses the membrane as a helical span at residues tyrosine 34–valine 58. Topologically, residues threonine 59–asparagine 70 are cytoplasmic. The chain crosses the membrane as a helical span at residues tyrosine 71 to tyrosine 93. The Extracellular segment spans residues serine 94–cysteine 107. Residues cysteine 107 and cysteine 184 are joined by a disulfide bond. Residues asparagine 108 to isoleucine 130 traverse the membrane as a helical segment. The 'Ionic lock' involved in activated form stabilization signature appears at glutamate 131–tryptophan 133. Residues glutamate 131 to histidine 149 lie on the Cytoplasmic side of the membrane. Residues alanine 150–valine 170 form a helical membrane-spanning segment. At glycine 171–serine 199 the chain is on the extracellular side. A glycan (N-linked (GlcNAc...) asparagine) is linked at asparagine 197. The chain crosses the membrane as a helical span at residues phenylalanine 200 to glycine 221. Residues arginine 222–arginine 249 are Cytoplasmic-facing. A helical transmembrane segment spans residues methionine 250 to phenylalanine 271. Residues isoleucine 272–leucine 283 lie on the Extracellular side of the membrane. The chain crosses the membrane as a helical span at residues phenylalanine 284–cysteine 305. An N6-(retinylidene)lysine modification is found at lysine 293. At methionine 306–alanine 348 the chain is on the cytoplasmic side. Cysteine 320 is lipidated: S-palmitoyl cysteine. The segment at glycine 327–alanine 348 is disordered. Over residues alanine 332–alanine 348 the composition is skewed to low complexity.

This sequence belongs to the G-protein coupled receptor 1 family. Opsin subfamily. Phosphorylated on some or all of the serine and threonine residues present in the C-terminal region. In terms of processing, contains one covalently linked retinal chromophore.

The protein localises to the membrane. It is found in the cell projection. The protein resides in the cilium. Its subcellular location is the photoreceptor outer segment. Functionally, photoreceptor required for image-forming vision at low light intensity. While most salt water fish species use retinal as chromophore, most freshwater fish use 3-dehydroretinal, or a mixture of retinal and 3-dehydroretinal. Light-induced isomerization of 11-cis to all-trans retinal triggers a conformational change that activates signaling via G-proteins. Subsequent receptor phosphorylation mediates displacement of the bound G-protein alpha subunit by arrestin and terminates signaling. The polypeptide is Rhodopsin (rho) (Sargocentron punctatissimum (Speckled squirrelfish)).